A 428-amino-acid polypeptide reads, in one-letter code: Adenylosuccinate synthetase (428 aa).

Residues 12-18 (GDEGKGK) and 40-42 (GHT) each bind GTP. Catalysis depends on Asp13, which acts as the Proton acceptor. Mg(2+)-binding residues include Asp13 and Gly40. IMP-binding positions include 13-16 (DEGK), 38-41 (NAGH), Thr130, Arg144, Gln225, Thr240, and Arg304. His41 (proton donor) is an active-site residue. Residue 300–306 (VTTGRAR) coordinates substrate. Residues Arg306, 332–334 (KID), and 414–416 (SVG) contribute to the GTP site.

Belongs to the adenylosuccinate synthetase family. Homodimer. It depends on Mg(2+) as a cofactor.

The protein resides in the cytoplasm. The catalysed reaction is IMP + L-aspartate + GTP = N(6)-(1,2-dicarboxyethyl)-AMP + GDP + phosphate + 2 H(+). The protein operates within purine metabolism; AMP biosynthesis via de novo pathway; AMP from IMP: step 1/2. Functionally, plays an important role in the de novo pathway of purine nucleotide biosynthesis. Catalyzes the first committed step in the biosynthesis of AMP from IMP. This is Adenylosuccinate synthetase from Clostridium acetobutylicum (strain ATCC 824 / DSM 792 / JCM 1419 / IAM 19013 / LMG 5710 / NBRC 13948 / NRRL B-527 / VKM B-1787 / 2291 / W).